We begin with the raw amino-acid sequence, 649 residues long: Protein teflon (649 aa).

Residues 33–56 (LYCHFCRDLFTQLPEFLRHLQSNH) form a C2H2-type 1 zinc finger. A disordered region spans residues 78-126 (EQGKAHEDAQSAGHNSSSGDSSSLMNSEDSRAIEGSEDNSDNSPMKPEQ). Residues 88–104 (SAGHNSSSGDSSSLMNS) show a composition bias toward low complexity. 2 C2H2-type zinc fingers span residues 599 to 621 (YFCK…LISH) and 625 to 648 (FQCT…RNAH).

Belongs to the Teflon family. As to expression, expressed at a low level in a variety of tissues, highest expression is in testis.

The protein resides in the nucleus. It is found in the chromosome. In terms of biological role, specifically required in males for proper segregation of autosomal bivalents at meiosis I. Expression is required in the male germ line prior to spermatocyte stage S4. May have a role as a bridging molecule maintaining adhesion to hold autosome bivalents together via heterochromatic connections. The chain is Protein teflon from Drosophila melanogaster (Fruit fly).